Here is a 69-residue protein sequence, read N- to C-terminus: Pleurain-A1 (69 aa).

The signal sequence occupies residues 1–18 (MFTLKKTLLLLFFLGTIS). The propeptide occupies 19-43 (ISLCKQERDADEDDGRKMTEEEVKR). Cys63 and Cys69 are disulfide-bonded.

As to expression, expressed by the skin glands.

It is found in the secreted. Antimicrobial peptide. Has activity against the Gram-positive bacterium S.aureus ATCC2592 (MIC=15 ug/ml), the Gram-negative bacteria E.coli ATCC25922 (MIC=60 ug/ml), B.dysenteriae (MIC=120 ug/ml), H.pylori NTCT11637 (MIC=30 ug/ml), and the fungus C.albicans ATCC2002 (MIC=30 ug/ml). Has little hemolytic activity on rabbit red blood cells. This chain is Pleurain-A1, found in Nidirana pleuraden (Yunnan pond frog).